A 60-amino-acid polypeptide reads, in one-letter code: uncharacterized protein (60 aa).

A helical membrane pass occupies residues 11–33; sequence VFTVGFITGGVTPVMVSFVWPAA. 2 N-linked (GlcNAc...) asparagine; by host glycosylation sites follow: asparagine 40 and asparagine 57.

The protein localises to the host membrane. This is an uncharacterized protein from African swine fever virus (strain Badajoz 1971 Vero-adapted) (Ba71V).